A 294-amino-acid chain; its full sequence is Phosphatidylserine decarboxylase proenzyme (294 aa).

Catalysis depends on charge relay system; for autoendoproteolytic cleavage activity residues Asp-92, His-149, and Ser-252. The active-site Schiff-base intermediate with substrate; via pyruvic acid; for decarboxylase activity is the Ser-252. Ser-252 is subject to Pyruvic acid (Ser); by autocatalysis.

This sequence belongs to the phosphatidylserine decarboxylase family. PSD-B subfamily. Prokaryotic type I sub-subfamily. As to quaternary structure, heterodimer of a large membrane-associated beta subunit and a small pyruvoyl-containing alpha subunit. It depends on pyruvate as a cofactor. Is synthesized initially as an inactive proenzyme. Formation of the active enzyme involves a self-maturation process in which the active site pyruvoyl group is generated from an internal serine residue via an autocatalytic post-translational modification. Two non-identical subunits are generated from the proenzyme in this reaction, and the pyruvate is formed at the N-terminus of the alpha chain, which is derived from the carboxyl end of the proenzyme. The autoendoproteolytic cleavage occurs by a canonical serine protease mechanism, in which the side chain hydroxyl group of the serine supplies its oxygen atom to form the C-terminus of the beta chain, while the remainder of the serine residue undergoes an oxidative deamination to produce ammonia and the pyruvoyl prosthetic group on the alpha chain. During this reaction, the Ser that is part of the protease active site of the proenzyme becomes the pyruvoyl prosthetic group, which constitutes an essential element of the active site of the mature decarboxylase.

The protein resides in the cell membrane. It carries out the reaction a 1,2-diacyl-sn-glycero-3-phospho-L-serine + H(+) = a 1,2-diacyl-sn-glycero-3-phosphoethanolamine + CO2. It participates in phospholipid metabolism; phosphatidylethanolamine biosynthesis; phosphatidylethanolamine from CDP-diacylglycerol: step 2/2. Functionally, catalyzes the formation of phosphatidylethanolamine (PtdEtn) from phosphatidylserine (PtdSer). The polypeptide is Phosphatidylserine decarboxylase proenzyme (Bordetella avium (strain 197N)).